Reading from the N-terminus, the 68-residue chain is Cold shock-like protein CspA (68 aa).

Residues 4–64 (GTVKWFNDAK…GPKGLQAQNV (61 aa)) form the CSD domain.

The protein localises to the cytoplasm. The chain is Cold shock-like protein CspA (cspA) from Stigmatella aurantiaca (strain DW4/3-1).